Consider the following 251-residue polypeptide: Triosephosphate isomerase (251 aa).

9–11 (NWK) contacts substrate. The active-site Electrophile is His95. Glu167 acts as the Proton acceptor in catalysis. Residues Gly173, Ser212, and 233–234 (GG) each bind substrate.

The protein belongs to the triosephosphate isomerase family. As to quaternary structure, homodimer.

The protein resides in the cytoplasm. It carries out the reaction D-glyceraldehyde 3-phosphate = dihydroxyacetone phosphate. It functions in the pathway carbohydrate biosynthesis; gluconeogenesis. The protein operates within carbohydrate degradation; glycolysis; D-glyceraldehyde 3-phosphate from glycerone phosphate: step 1/1. In terms of biological role, involved in the gluconeogenesis. Catalyzes stereospecifically the conversion of dihydroxyacetone phosphate (DHAP) to D-glyceraldehyde-3-phosphate (G3P). The polypeptide is Triosephosphate isomerase (Pseudomonas entomophila (strain L48)).